A 92-amino-acid polypeptide reads, in one-letter code: N(2)-fixation sustaining protein CowN (92 aa).

This sequence belongs to the CowN family.

Is required to sustain N(2)-dependent growth in the presence of low levels of carbon monoxide (CO). Probably acts by protecting the N(2) fixation ability of the nitrogenase complex, which is inactivated in the presence of CO. The sequence is that of N(2)-fixation sustaining protein CowN from Rhodobacter capsulatus (strain ATCC BAA-309 / NBRC 16581 / SB1003).